A 229-amino-acid polypeptide reads, in one-letter code: Pdp3-interacting factor 1 (229 aa).

The active-site Nucleophile is the Asp12. 3 residues coordinate Mg(2+): Asp12, Asp14, and Asp176. Residue Asp14 is the Proton donor of the active site.

The protein belongs to the HAD-like hydrolase superfamily. In terms of assembly, component of the mst2 complex composed of at least eaf6, mst2, nto1, pdp3, ptf1, ptf2 and tfg3. It depends on Mg(2+) as a cofactor.

It is found in the cytoplasm. Its subcellular location is the nucleus. The enzyme catalyses D-ribitol 5-phosphate + H2O = ribitol + phosphate. It catalyses the reaction D-sorbitol 6-phosphate + H2O = D-sorbitol + phosphate. The catalysed reaction is sn-glycerol 1-phosphate + H2O = glycerol + phosphate. It carries out the reaction D-erythrose 4-phosphate + H2O = D-erythrose + phosphate. Functionally, component of the mst2 complex which is a highly specific H3 lysine 14 (H3K14) acetyltransferase that functions together with gcn5 to regulate global levels of H3K14 acetylation (H3K14ac), critical for DNA damage checkpoint activation. In terms of biological role, may also function as a sugar alcohol (polyol) phosphatase that prevents accumulation of toxic levels of polyol phosphates, which can impair glycolysis by inhibiting glucose-6-phosphate isomerase. The polypeptide is Pdp3-interacting factor 1 (Schizosaccharomyces pombe (strain 972 / ATCC 24843) (Fission yeast)).